A 172-amino-acid polypeptide reads, in one-letter code: Large ribosomal subunit protein uL10 (172 aa).

Belongs to the universal ribosomal protein uL10 family. In terms of assembly, part of the ribosomal stalk of the 50S ribosomal subunit. The N-terminus interacts with L11 and the large rRNA to form the base of the stalk. The C-terminus forms an elongated spine to which L12 dimers bind in a sequential fashion forming a multimeric L10(L12)X complex.

In terms of biological role, forms part of the ribosomal stalk, playing a central role in the interaction of the ribosome with GTP-bound translation factors. In Methylorubrum extorquens (strain CM4 / NCIMB 13688) (Methylobacterium extorquens), this protein is Large ribosomal subunit protein uL10.